A 197-amino-acid chain; its full sequence is Signal-regulatory protein delta (197 aa).

An N-terminal signal peptide occupies residues 1-29; sequence MPIPASPLHPPLPSLLLYLLLELAGVTHV. The Ig-like V-type domain maps to 31–135; sequence HVQQTEMSQT…IKEYQSGRGT (105 aa). A disulfide bridge connects residues cysteine 51 and cysteine 117. The segment at 139-158 is disordered; it reads VTEQNPRPPKNRPAGRAGSR. Asparagine 174 carries an N-linked (GlcNAc...) asparagine glycan.

It is found in the secreted. In Homo sapiens (Human), this protein is Signal-regulatory protein delta (SIRPD).